Reading from the N-terminus, the 343-residue chain is MKKIAVLFGGNSPEYSVSLTSAASVIQAIDPLKYEVMTIGIAPTMDWYWYQGNLANVRNDTWLEDHKNCHQLTFSSQGFILGEKRIVPDVLFPVLHGKYGEDGCIQGLLELMNLPYVGCHVAASALCMNKWLLHQLADTMGIASAPTLLLSRYENDPATIDRFIQDHGFPIFIKPNEAGSSKGITKVTDKTALQSALTTAFAYGSTVLIQKAIAGIEIGCGILGNEQLTIGACDAISLVDGFFDFEEKYQLISATITVPAPLPLALESQIKEQAQLLYRNLGLTGLARIDFFVTNQGAIYLNEINTMPGFTGHSRYPAMMAEVGLSYEILVEQLIALAEEDKR.

An ATP-grasp domain is found at H134–A336. I164 to G219 contacts ATP. Mg(2+) is bound by residues D290, E303, and N305. Mn(2+) is bound by residues D290, E303, and N305.

It belongs to the D-alanine--D-alanine ligase family. Mg(2+) is required as a cofactor. Requires Mn(2+) as cofactor.

Its subcellular location is the cell membrane. The catalysed reaction is D-serine + D-alanine + ATP = D-alanyl-D-serine + ADP + phosphate + H(+). Its function is as follows. D-alanine--D-alanine ligase of altered specificity, which catalyzes synthesis of D-Ala-D-Ser; produces a peptidoglycan which does not terminate in D-alanine but in D-serine, thus probably reducing affinity for vancomycin. Together with VanT and VanXYC, required for vancomycin resistance in E.gallinarum strain BM4174. The chain is Vancomycin C-type resistance protein VanC1 from Enterococcus gallinarum.